The following is a 245-amino-acid chain: Uridylate kinase (245 aa).

ATP is bound at residue 15–18; sequence KLSG. The tract at residues 23–28 is involved in allosteric activation by GTP; the sequence is GDEGFG. Residue Gly57 coordinates UMP. ATP contacts are provided by Gly58 and Arg62. UMP is bound by residues Asp77 and 138-145; that span reads TGNPFCTT. Residues Thr165, Tyr171, and Asp174 each coordinate ATP.

Belongs to the UMP kinase family. In terms of assembly, homohexamer.

It is found in the cytoplasm. It catalyses the reaction UMP + ATP = UDP + ADP. It functions in the pathway pyrimidine metabolism; CTP biosynthesis via de novo pathway; UDP from UMP (UMPK route): step 1/1. Allosterically activated by GTP. Inhibited by UTP. Catalyzes the reversible phosphorylation of UMP to UDP. In Shewanella baltica (strain OS155 / ATCC BAA-1091), this protein is Uridylate kinase.